Consider the following 139-residue polypeptide: Putative lipoprotein MIP_01412 (139 aa).

Residues 1–19 (MRNRTVAAGAVLTAALLGA) form the signal peptide. Cysteine 20 is lipidated: N-palmitoyl cysteine. The S-diacylglycerol cysteine moiety is linked to residue cysteine 20.

The protein belongs to the mycobacterial 19 kDa antigen family.

It localises to the cell membrane. This is Putative lipoprotein MIP_01412 from Mycobacterium indicus pranii (strain DSM 45239 / MTCC 9506).